Here is a 44-residue protein sequence, read N- to C-terminus: MQHANCNREIKIYEGAKHHLHKETDEVKKSVMKEIETWIFNRVK.

This is an uncharacterized protein from Vaccinia virus (strain Western Reserve) (VACV).